The chain runs to 548 residues: Alpha-1,3-mannosyl-glycoprotein 4-beta-N-acetylglucosaminyltransferase B (548 aa).

The Cytoplasmic portion of the chain corresponds to 1 to 7; that stretch reads MRLRNGT. Residues 8 to 28 form a helical; Signal-anchor for type II membrane protein membrane-spanning segment; sequence FLTLLLFCLCAFLSLSWYAAL. At 29 to 548 the chain is on the lumenal side; the sequence is SGQKGDVVDV…LSEIFLKKAD (520 aa). The stretch at 36-83 forms a coiled coil; sequence VDVYQREFLALRDRLHAAEQESLKRSKELNLVLDEIKRAVSERQALRD. Asn87 and Asn103 each carry an N-linked (GlcNAc...) asparagine glycan.

The protein belongs to the glycosyltransferase 54 family. In terms of assembly, interacts with SLC35A3. Requires a divalent metal cation as cofactor. Post-translationally, N-glycosylated. As to expression, widely expressed. Strongly overexpressed in pancreatic cancer.

It is found in the golgi apparatus membrane. It catalyses the reaction an N(4)-{beta-D-GlcNAc-(1-&gt;2)-alpha-D-Man-(1-&gt;3)-[alpha-D-Man-(1-&gt;6)]-beta-D-Man-(1-&gt;4)-beta-D-GlcNAc-(1-&gt;4)-beta-D-GlcNAc}-L-asparaginyl-[protein] + UDP-N-acetyl-alpha-D-glucosamine = an N(4)-{beta-D-GlcNAc-(1-&gt;2)-[beta-D-GlcNAc-(1-&gt;4)]-alpha-D-Man-(1-&gt;3)-[alpha-D-Man-(1-&gt;6)]-beta-D-Man-(1-&gt;4)-beta-D-GlcNAc-(1-&gt;4)-beta-D-GlcNAc}-L-asparaginyl-[protein] + UDP + H(+). The enzyme catalyses N(4)-{beta-D-GlcNAc-(1-&gt;2)-alpha-D-Man-(1-&gt;3)-[beta-D-GlcNAc-(1-&gt;2)-alpha-D-Man-(1-&gt;6)]-beta-D-Man-(1-&gt;4)-beta-D-GlcNAc-(1-&gt;4)-beta-D-GlcNAc}-L-asparaginyl-[protein] + UDP-N-acetyl-alpha-D-glucosamine = N(4)-{beta-D-GlcNAc-(1-&gt;2)-[beta-D-GlcNAc-(1-&gt;4)]-alpha-D-Man-(1-&gt;3)-[beta-D-GlcNAc-(1-&gt;2)-alpha-D-Man-(1-&gt;6)]-beta-D-Man-(1-&gt;4)-beta-D-GlcNAc-(1-&gt;4)-beta-D-GlcNAc}-L-asparaginyl-[protein] + UDP + H(+). It carries out the reaction an N(4)-{beta-D-GlcNAc-(1-&gt;2)-alpha-D-Man-(1-&gt;3)-[beta-D-GlcNAc-(1-&gt;2)-[beta-D-GlcNAc-(1-&gt;6)]-alpha-D-Man-(1-&gt;6)]-beta-D-Man-(1-&gt;4)-beta-D-GlcNAc-(1-&gt;4)-beta-D-GlcNAc}-L-asparaginyl-[protein] + UDP-N-acetyl-alpha-D-glucosamine = an N(4)-{beta-D-GlcNAc-(1-&gt;2)-[beta-D-GlcNAc-(1-&gt;4)]-alpha-D-Man-(1-&gt;3)-[beta-D-GlcNAc-(1-&gt;2)-[beta-D-GlcNAc-(1-&gt;6)]-alpha-D-Man-(1-&gt;6)]-beta-D-Man-(1-&gt;4)-beta-D-GlcNAc-(1-&gt;4)-beta-D-GlcNAc}-L-asparaginyl-[protein] + UDP + H(+). The catalysed reaction is an N(4)-{beta-D-GlcNAc-(1-&gt;2)-alpha-D-Man-(1-&gt;3)-[beta-D-GlcNAc-(1-&gt;2)-alpha-D-Man-(1-&gt;6)]-beta-D-Man-(1-&gt;4)-beta-D-GlcNAc-(1-&gt;4)-[alpha-L-Fuc-(1-&gt;6)]-beta-D-GlcNAc}-L-asparaginyl-[protein] + UDP-N-acetyl-alpha-D-glucosamine = N(4)-{beta-D-GlcNAc-(1-&gt;2)-[beta-D-GlcNAc-(1-&gt;4)]-alpha-D-Man-(1-&gt;3)-[beta-D-GlcNAc-(1-&gt;2)-alpha-D-Man-(1-&gt;6)]-beta-D-Man-(1-&gt;4)-beta-D-GlcNAc-(1-&gt;4)-[alpha-L-Fuc-(1-&gt;6)]-beta-D-GlcNAc}-asparaginyl-[protein] + UDP + H(+). It catalyses the reaction an N(4)-{beta-D-GlcNAc-(1-&gt;2)-alpha-D-Man-(1-&gt;3)-[beta-D-Gal-(1-&gt;4)-beta-D-GlcNAc-(1-&gt;2)-alpha-D-Man-(1-&gt;6)]-beta-D-Man-(1-&gt;4)-beta-D-GlcNAc-(1-&gt;4)-beta-D-GlcNAc}-L-asparaginyl-[protein] + UDP-N-acetyl-alpha-D-glucosamine = an N(4)-{beta-D-GlcNAc-(1-&gt;2)-[beta-D-GlcNAc-(1-&gt;4)]-alpha-D-Man-(1-&gt;3)-[beta-D-Gal-(1-&gt;4)-beta-D-GlcNAc-(1-&gt;2)-alpha-D-Man-(1-&gt;6)]-beta-D-Man-(1-&gt;4)-beta-D-GlcNAc-(1-&gt;4)-beta-D-GlcNAc}-L-asparaginyl-[protein] + UDP + H(+). The enzyme catalyses N(4)-{beta-D-GlcNAc-(1-&gt;2)-alpha-D-Man-(1-&gt;3)-[alpha-D-Man-(1-&gt;3)-{alpha-D-Man-(1-&gt;6)}-alpha-D-Man-(1-&gt;6)]-beta-D-Man-(1-&gt;4)-beta-D-GlcNAc-(1-&gt;4)-beta-D-GlcNAc}-asparaginyl-[protein] + UDP-N-acetyl-alpha-D-glucosamine = N(4)-{beta-D-GlcNAc-(1-&gt;2)-[beta-D-GlcNAc-(1-&gt;4)]-alpha-D-Man-(1-&gt;3)-[alpha-D-Man-(1-&gt;3)-{alpha-D-Man-(1-&gt;6)}-alpha-D-Man-(1-&gt;6)]-beta-D-Man-(1-&gt;4)-beta-D-GlcNAc-(1-&gt;4)-beta-D-GlcNAc}-asparaginyl-[protein] + UDP + H(+). It carries out the reaction N(4)-{beta-D-GlcNAc-(1-&gt;2)-alpha-D-Man-(1-&gt;3)-beta-D-Man-(1-&gt;4)-beta-D-GlcNAc-(1-&gt;4)-beta-D-GlcNAc}-asparaginyl-[protein] + UDP-N-acetyl-alpha-D-glucosamine = N(4)-{beta-D-GlcNAc-(1-&gt;2)-[beta-D-GlcNAc-(1-&gt;4)]-alpha-D-Man-(1-&gt;3)-beta-D-Man-(1-&gt;4)-beta-D-GlcNAc-(1-&gt;4)-beta-D-GlcNAc}-asparaginyl-[protein] + UDP + H(+). The protein operates within protein modification; protein glycosylation. Functionally, glycosyltransferase that catalyzes the transfer of GlcNAc from UDP-GlcNAc to the GlcNAcbeta1-2Manalpha1-3 arm of the core structure of N-linked glycans through a beta1-4 linkage and participates in the production of tri- and tetra-antennary N-linked sugar chains. Prefers complex-type N-glycans over hybrid-types. Has lower affinities for donors or acceptors than MGAT4A, suggesting that, under physiological conditions, it is not the main contributor in N-glycan biosynthesis. The protein is Alpha-1,3-mannosyl-glycoprotein 4-beta-N-acetylglucosaminyltransferase B of Homo sapiens (Human).